The chain runs to 469 residues: GTPase Der (469 aa).

2 EngA-type G domains span residues 3-166 (PVIA…PEDE) and 177-350 (LRLA…ESAN). GTP contacts are provided by residues 9–16 (GRPNVGKS), 56–60 (DTGGI), 118–121 (NKVD), 183–190 (GRPNVGKS), 230–234 (DTAGV), and 295–298 (NKWD). The KH-like domain maps to 351 to 435 (LKVSPAKLTQ…PVKIEFKTSE (85 aa)).

Belongs to the TRAFAC class TrmE-Era-EngA-EngB-Septin-like GTPase superfamily. EngA (Der) GTPase family. In terms of assembly, associates with the 50S ribosomal subunit.

In terms of biological role, GTPase that plays an essential role in the late steps of ribosome biogenesis. In Acinetobacter baumannii (strain SDF), this protein is GTPase Der.